The following is a 345-amino-acid chain: Phenylalanine--tRNA ligase alpha subunit (345 aa).

Residue Glu-253 coordinates Mg(2+).

It belongs to the class-II aminoacyl-tRNA synthetase family. Phe-tRNA synthetase alpha subunit type 1 subfamily. Tetramer of two alpha and two beta subunits. The cofactor is Mg(2+).

It localises to the cytoplasm. The catalysed reaction is tRNA(Phe) + L-phenylalanine + ATP = L-phenylalanyl-tRNA(Phe) + AMP + diphosphate + H(+). The chain is Phenylalanine--tRNA ligase alpha subunit from Nitratidesulfovibrio vulgaris (strain DSM 19637 / Miyazaki F) (Desulfovibrio vulgaris).